The primary structure comprises 431 residues: Tyrosine--tRNA ligase (431 aa).

Y34 provides a ligand contact to L-tyrosine. Residues 39-48 (PTADSLHIGH) carry the 'HIGH' region motif. L-tyrosine contacts are provided by Y171 and Q175. The 'KMSKS' region motif lies at 231–235 (KFGKT). Residue K234 participates in ATP binding. The S4 RNA-binding domain maps to 353–422 (INVVEALVKT…GKYTILRRGK (70 aa)).

It belongs to the class-I aminoacyl-tRNA synthetase family. TyrS type 1 subfamily. Homodimer.

It is found in the cytoplasm. The enzyme catalyses tRNA(Tyr) + L-tyrosine + ATP = L-tyrosyl-tRNA(Tyr) + AMP + diphosphate + H(+). In terms of biological role, catalyzes the attachment of tyrosine to tRNA(Tyr) in a two-step reaction: tyrosine is first activated by ATP to form Tyr-AMP and then transferred to the acceptor end of tRNA(Tyr). In Neisseria meningitidis serogroup C / serotype 2a (strain ATCC 700532 / DSM 15464 / FAM18), this protein is Tyrosine--tRNA ligase.